The chain runs to 77 residues: Large ribosomal subunit protein uL29 (77 aa).

The protein belongs to the universal ribosomal protein uL29 family.

The protein is Large ribosomal subunit protein uL29 of Corynebacterium urealyticum (strain ATCC 43042 / DSM 7109).